The sequence spans 195 residues: Exosome complex component CSL4 (195 aa).

Residues S21 and S98 each carry the phosphoserine modification. Residues 66-147 form the S1 motif domain; it reads DVGAIVTCKV…AQSNYLLTTA (82 aa).

It belongs to the CSL4 family. Component of the RNA exosome core complex (Exo-9), composed of EXOSC1, EXOSC2, EXOSC3, EXOSC4, EXOSC5, EXOSC6, EXOSC7, EXOSC8 and EXOSC9; within the complex interacts with EXOSC6. The catalytically inactive RNA exosome core complex (Exo-9) associates with the catalytic subunit EXOSC10/RRP6. Exo-9 may associate with DIS3 to form the nucleolar exosome complex, or DIS3L to form the cytoplasmic exosome complex. Exo-9 is formed by a hexameric base ring consisting of the heterodimers EXOSC4-EXOSC9, EXOSC5-EXOSC8 and EXOSC6-EXOSC7, and a cap ring consisting of EXOSC1, EXOSC2 and EXOSC3. The RNA exosome complex associates with cofactors C1D/RRP47, MPHOSPH6/MPP6 and MTREX/MTR4. Interacts with DDX60.

It is found in the nucleus. Its subcellular location is the nucleolus. It localises to the cytoplasm. Functionally, non-catalytic component of the RNA exosome complex which has 3'-&gt;5' exoribonuclease activity and participates in a multitude of cellular RNA processing and degradation events. In the nucleus, the RNA exosome complex is involved in proper maturation of stable RNA species such as rRNA, snRNA and snoRNA, in the elimination of RNA processing by-products and non-coding 'pervasive' transcripts, such as antisense RNA species and promoter-upstream transcripts (PROMPTs), and of mRNAs with processing defects, thereby limiting or excluding their export to the cytoplasm. The RNA exosome may be involved in Ig class switch recombination (CSR) and/or Ig variable region somatic hypermutation (SHM) by targeting AICDA deamination activity to transcribed dsDNA substrates. In the cytoplasm, the RNA exosome complex is involved in general mRNA turnover and specifically degrades inherently unstable mRNAs containing AU-rich elements (AREs) within their 3' untranslated regions, and in RNA surveillance pathways, preventing translation of aberrant mRNAs. It seems to be involved in degradation of histone mRNA. The catalytic inactive RNA exosome core complex of 9 subunits (Exo-9) is proposed to play a pivotal role in the binding and presentation of RNA for ribonucleolysis, and to serve as a scaffold for the association with catalytic subunits and accessory proteins or complexes. EXOSC1 as peripheral part of the Exo-9 complex stabilizes the hexameric ring of RNase PH-domain subunits through contacts with EXOSC6 and EXOSC8. The chain is Exosome complex component CSL4 (EXOSC1) from Homo sapiens (Human).